A 204-amino-acid chain; its full sequence is Protein GrpE (204 aa).

The span at 1–12 (MSNEEQAQKDDA) shows a compositional bias: basic and acidic residues. The segment at 1-32 (MSNEEQAQKDDAQPVNEAAIDATAEQADAEVE) is disordered. Residues 17-26 (EAAIDATAEQ) are compositionally biased toward low complexity.

This sequence belongs to the GrpE family. Homodimer.

The protein resides in the cytoplasm. In terms of biological role, participates actively in the response to hyperosmotic and heat shock by preventing the aggregation of stress-denatured proteins, in association with DnaK and GrpE. It is the nucleotide exchange factor for DnaK and may function as a thermosensor. Unfolded proteins bind initially to DnaJ; upon interaction with the DnaJ-bound protein, DnaK hydrolyzes its bound ATP, resulting in the formation of a stable complex. GrpE releases ADP from DnaK; ATP binding to DnaK triggers the release of the substrate protein, thus completing the reaction cycle. Several rounds of ATP-dependent interactions between DnaJ, DnaK and GrpE are required for fully efficient folding. This is Protein GrpE from Pseudoalteromonas atlantica (strain T6c / ATCC BAA-1087).